We begin with the raw amino-acid sequence, 272 residues long: Regulatory factor X-associated protein (272 aa).

3 disordered regions span residues methionine 1 to histidine 20, leucine 74 to threonine 142, and lysine 175 to glycine 195. Acidic residues predominate over residues glycine 79–aspartate 94. A Nuclear localization signal motif is present at residues lysine 163–lysine 178. Residue lysine 198 forms a Glycyl lysine isopeptide (Lys-Gly) (interchain with G-Cter in SUMO2) linkage. Residues threonine 214 to threonine 270 are C-terminal domain.

As to quaternary structure, the RFX heterotetrameric complex consists of 2 molecules of RFX5 and one each of RFXAP and RFX-B/RFXANK; with each subunit representing a separate complementation group. RFX forms cooperative DNA binding complexes with X2BP and CBF/NF-Y. RFX associates with CIITA to form an active transcriptional complex. Phosphorylated. Ubiquitous.

Its subcellular location is the nucleus. Its function is as follows. Part of the RFX complex that binds to the X-box of MHC II promoters. The chain is Regulatory factor X-associated protein (RFXAP) from Homo sapiens (Human).